We begin with the raw amino-acid sequence, 303 residues long: Geranylgeranyl pyrophosphate synthase (303 aa).

The isopentenyl diphosphate site is built by lysine 32, arginine 35, and histidine 64. 2 residues coordinate Mg(2+): aspartate 71 and aspartate 75. Arginine 80 serves as a coordination point for dimethylallyl diphosphate. Arginine 81 is a binding site for isopentenyl diphosphate. Dimethylallyl diphosphate-binding residues include lysine 158, threonine 159, glutamine 192, lysine 209, and lysine 219.

The protein belongs to the FPP/GGPP synthase family. As to quaternary structure, homooligomer. Mg(2+) serves as cofactor.

The protein resides in the cytoplasm. The enzyme catalyses isopentenyl diphosphate + dimethylallyl diphosphate = (2E)-geranyl diphosphate + diphosphate. It carries out the reaction isopentenyl diphosphate + (2E)-geranyl diphosphate = (2E,6E)-farnesyl diphosphate + diphosphate. The catalysed reaction is isopentenyl diphosphate + (2E,6E)-farnesyl diphosphate = (2E,6E,10E)-geranylgeranyl diphosphate + diphosphate. Its pathway is isoprenoid biosynthesis; farnesyl diphosphate biosynthesis; farnesyl diphosphate from geranyl diphosphate and isopentenyl diphosphate: step 1/1. It functions in the pathway isoprenoid biosynthesis; geranyl diphosphate biosynthesis; geranyl diphosphate from dimethylallyl diphosphate and isopentenyl diphosphate: step 1/1. The protein operates within isoprenoid biosynthesis; geranylgeranyl diphosphate biosynthesis; geranylgeranyl diphosphate from farnesyl diphosphate and isopentenyl diphosphate: step 1/1. Functionally, catalyzes the trans-addition of the three molecules of IPP onto DMAPP to form geranylgeranyl pyrophosphate, an important precursor of carotenoids and geranylated proteins. This chain is Geranylgeranyl pyrophosphate synthase (ggps1), found in Dictyostelium discoideum (Social amoeba).